We begin with the raw amino-acid sequence, 368 residues long: Putative glutamate--cysteine ligase 2 (368 aa).

This sequence belongs to the glutamate--cysteine ligase type 2 family. YbdK subfamily.

The enzyme catalyses L-cysteine + L-glutamate + ATP = gamma-L-glutamyl-L-cysteine + ADP + phosphate + H(+). In terms of biological role, ATP-dependent carboxylate-amine ligase which exhibits weak glutamate--cysteine ligase activity. The polypeptide is Putative glutamate--cysteine ligase 2 (Pseudomonas putida (strain ATCC 47054 / DSM 6125 / CFBP 8728 / NCIMB 11950 / KT2440)).